The chain runs to 370 residues: GTPase Obg (370 aa).

The 159-residue stretch at 1–159 folds into the Obg domain; that stretch reads MKFIDEARIE…RMLRLELKVL (159 aa). The disordered stretch occupies residues 127-146; sequence NLHFKSSTNRAPRQKTDGKP. The 175-residue stretch at 160–334 folds into the OBG-type G domain; the sequence is ADVGLLGMPN…LCYAIYDYLA (175 aa). GTP-binding positions include 166–173, 191–195, 213–216, 284–287, and 315–317; these read GMPNAGKS, FTTLA, DIPG, NKLD, and SAL. Mg(2+)-binding residues include serine 173 and threonine 193. The interval 350-370 is disordered; it reads ADVRFRDAPPSDGGATSGGDA.

The protein belongs to the TRAFAC class OBG-HflX-like GTPase superfamily. OBG GTPase family. In terms of assembly, monomer. Mg(2+) is required as a cofactor.

It localises to the cytoplasm. Functionally, an essential GTPase which binds GTP, GDP and possibly (p)ppGpp with moderate affinity, with high nucleotide exchange rates and a fairly low GTP hydrolysis rate. Plays a role in control of the cell cycle, stress response, ribosome biogenesis and in those bacteria that undergo differentiation, in morphogenesis control. The sequence is that of GTPase Obg from Burkholderia vietnamiensis (strain G4 / LMG 22486) (Burkholderia cepacia (strain R1808)).